The sequence spans 244 residues: tRNA pseudouridine synthase B (244 aa).

The Nucleophile role is filled by Asp-46.

The protein belongs to the pseudouridine synthase TruB family. Type 1 subfamily.

It catalyses the reaction uridine(55) in tRNA = pseudouridine(55) in tRNA. In terms of biological role, responsible for synthesis of pseudouridine from uracil-55 in the psi GC loop of transfer RNAs. The polypeptide is tRNA pseudouridine synthase B (Bordetella parapertussis (strain 12822 / ATCC BAA-587 / NCTC 13253)).